Reading from the N-terminus, the 110-residue chain is uncharacterized protein (110 aa).

The N-terminal stretch at 1-19 (MKYLVGCLCLAAICLSAGA) is a signal peptide. N-linked (GlcNAc...) asparagine glycosylation is present at Asn101.

Component of the acid-soluble and acid-insoluble organic matrix of prismatic shell layers (at protein level).

Its subcellular location is the secreted. This is an uncharacterized protein from Haliotis asinina (Donkey's ear abalone).